A 951-amino-acid chain; its full sequence is WD repeat-containing and planar cell polarity effector protein fritz (951 aa).

2 WD repeats span residues 304–343 and 345–384; these read PMGAQICSFAFSPDQEKLFLGSVDRNICLHDLVQQSTKYA and QIEIVPNQCAWHCDSAMLCVANERSVLQCFDLALATIGHQ. 3 stretches are compositionally biased toward polar residues: residues 709 to 720, 757 to 771, and 818 to 828; these read TLKSNSSLQQAP, IPDQSAQLGQFSTMP, and SILSNPANPAP. Disordered stretches follow at residues 709 to 776, 816 to 883, and 903 to 951; these read TLKS…SPPP, TASI…AARH, and EYLK…FGVV. Low complexity predominate over residues 930–942; sequence SSKGGNSSSSSSS.

This sequence belongs to the WD repeat fritz family.

The protein resides in the cell membrane. Its subcellular location is the cytoplasm. The protein localises to the cytoskeleton. It localises to the cilium axoneme. Probable effector of the planar cell polarity signaling pathway which regulates the septin cytoskeleton in both ciliogenesis and collective cell movements. Functions cell autonomously to regulate wing cell hair polarity and number. The polypeptide is WD repeat-containing and planar cell polarity effector protein fritz (frtz) (Drosophila melanogaster (Fruit fly)).